A 517-amino-acid chain; its full sequence is Phospholipase C C (517 aa).

The tat-type signal signal peptide spans 1–39 (MVSQGAFAGMSRRAFLAKAAGAGAAAVLTDWAAPVIEKA).

Belongs to the bacterial phospholipase C family. Predicted to be exported by the Tat system. The position of the signal peptide cleavage has not been experimentally proven.

Its subcellular location is the secreted. The protein resides in the cell wall. It catalyses the reaction a 1,2-diacyl-sn-glycero-3-phosphocholine + H2O = phosphocholine + a 1,2-diacyl-sn-glycerol + H(+). The catalysed reaction is 1,2-dihexadecanoyl-sn-glycero-3-phosphocholine + H2O = 1,2-dihexadecanoyl-sn-glycerol + phosphocholine + H(+). Its function is as follows. Involved in virulence. Induces cytotoxic effects on mouse macrophage cell lines, via direct or indirect enzymatic hydrolysis of cell membrane phospholipids. Hydrolyzes phosphatidylcholine. Does not have hemolytic activity. This chain is Phospholipase C C, found in Mycobacterium tuberculosis (strain ATCC 25618 / H37Rv).